Reading from the N-terminus, the 549-residue chain is Probable protein kinase UbiB (549 aa).

A Protein kinase domain is found at 123–501 (DFDETPLASA…QQQAHKSNYM (379 aa)). ATP is bound by residues 129-137 (LASASISQV) and Lys-152. The Proton acceptor role is filled by Asp-287. Helical transmembrane passes span 499-516 (NYML…TLLF) and 521-540 (TLWS…FIGW).

It belongs to the ABC1 family. UbiB subfamily.

It is found in the cell inner membrane. The protein operates within cofactor biosynthesis; ubiquinone biosynthesis [regulation]. Is probably a protein kinase regulator of UbiI activity which is involved in aerobic coenzyme Q (ubiquinone) biosynthesis. The sequence is that of Probable protein kinase UbiB from Shewanella sp. (strain W3-18-1).